The following is a 320-amino-acid chain: Short-chain dehydrogenase TIC 32 B, chloroplastic (320 aa).

NADP(+)-binding positions include 40–46 (GGTSGIG), 92–93 (DL), asparagine 119, and threonine 140. Serine 174 lines the substrate pocket. Tyrosine 196 functions as the Proton acceptor in the catalytic mechanism. An interaction with calmodulin region spans residues 301-317 (DTTLADKLWDFSIKLVD).

It belongs to the short-chain dehydrogenases/reductases (SDR) family. As to quaternary structure, part of the Tic complex.

It is found in the plastid. The protein resides in the chloroplast inner membrane. Involved in protein precursor import into chloroplasts. This chain is Short-chain dehydrogenase TIC 32 B, chloroplastic, found in Brassica napus (Rape).